The chain runs to 422 residues: G-protein coupled receptor 83 (422 aa).

The first 17 residues, 1–17, serve as a signal peptide directing secretion; the sequence is MNVPPVLLLFLLSSVRA. At 18-70 the chain is on the extracellular side; the sequence is TEQPQVVTEHPSMDAALTGANASHFWANYTFSDWQNFVGRRRYGAESQNPTVK. Residues 71 to 91 traverse the membrane as a helical segment; sequence ALLIVAYSFIIVFSLFGNVLV. Residues 92 to 106 lie on the Cytoplasmic side of the membrane; it reads CHVIFKNQRMHSATS. The chain crosses the membrane as a helical span at residues 107-127; that stretch reads LFIVNLAVADIMITLLNTPFT. Residues 128–143 are Extracellular-facing; that stretch reads LVRFVNSTWVFGKGMC. Cys143 and Cys223 are oxidised to a cystine. Residues 144–166 form a helical membrane-spanning segment; the sequence is HVSRFAQYCSLHVSALTLTAIAV. The Cytoplasmic portion of the chain corresponds to 167–184; that stretch reads DRHQVIMHPLKPRISITK. A helical transmembrane segment spans residues 185–205; the sequence is GVIYIAVIWVMATFFSLPHAI. The Extracellular portion of the chain corresponds to 206–236; it reads CQKLFTFKYSEDIVRSLCLPDFPEPADLFWK. The helical transmembrane segment at 237–257 threads the bilayer; that stretch reads YLDLATFILLYLLPLFIISVA. Topologically, residues 258–292 are cytoplasmic; the sequence is YARVAKKLWLCNTIGDVTTEQYLALRRKKKTTVKM. Residues 293 to 313 traverse the membrane as a helical segment; that stretch reads LVLVVVLFALCWFPLNCYVLL. The Extracellular segment spans residues 314–326; it reads LSSKAIHTNNALY. Residues 327-347 form a helical membrane-spanning segment; the sequence is FAFHWFAMSSTCYNPFIYCWL. The Cytoplasmic portion of the chain corresponds to 348–422; sequence NENFRVELKA…SSVEPTVAVS (75 aa). The tract at residues 401–422 is disordered; sequence PSSQIQSGKTDLSSVEPTVAVS.

This sequence belongs to the G-protein coupled receptor 1 family. In terms of tissue distribution, expressed preferentially in brain, and its neuronal expression is relegated to limbic brain regions, particularly in forebrain.

It is found in the cell membrane. Functionally, G-protein coupled receptor for PEN, a neuropeptide produced from the precursor protein, proSAAS (encoded by PCSK1N). Acts through a G(i)- and G(q)-alpha-alpha-mediated pathway in response to PEN. Plays a role in food intake and body weight regulation. May contribute to the regulation of anxiety-related behaviors. This Rattus norvegicus (Rat) protein is G-protein coupled receptor 83.